Reading from the N-terminus, the 189-residue chain is MAQIRQEALKKQKSETQKSTEGFVDIGNLAQWTCSSEKSGFPIRLVRDDNIDTYWQSDGSQPHTIHIKFVKRVSIKYVSMYLQYTLDESYTPSTLRISAGTGFQDLEIVTTVQVEEPTGWVHVPVGDFGRNGLLDVHLIQIKILANHQSGKDSHVRLIKIYAPEIEQPAIAVDEIPYTSLQFISRNQLR.

The DOC domain maps to alanine 2–glutamine 187.

Belongs to the APC10 family. The APC/C is composed of at least 13 subunits: apc1, apc2, nuc2, apc4, apc5, cut9, apc8, apc10, apc11, hcn1, apc13, apc14 and apc15. Interacts with nuc2.

Component of the anaphase-promoting complex/cyclosome (APC/C), a cell cycle-regulated E3 ubiquitin-protein ligase complex that controls progression through mitosis and the G1 phase of the cell cycle. The APC/C is thought to confer substrate specificity and, in the presence of ubiquitin-conjugating E2 enzymes, it catalyzes the formation of protein-ubiquitin conjugates that are subsequently degraded by the 26S proteasome. Acts as a positive regulator of the anaphase promoting complex (APC)-cyclosome. Involved in G1 cell cycle arrest in response to nitrogen starvation. Required for ubiquitination and degradation of the mitotic B-type cyclin, cdc13. The protein is Anaphase-promoting complex subunit 10 (apc10) of Schizosaccharomyces pombe (strain 972 / ATCC 24843) (Fission yeast).